The chain runs to 74 residues: MGSIGMTELLLIFGIIVLLFGAKKLPEIGRGLGEGIRSFKSAISGEEKKEDEKVVTPKEIEAEVIKKEKVKENA.

A helical membrane pass occupies residues 1 to 21 (MGSIGMTELLLIFGIIVLLFG).

Belongs to the TatA/E family. As to quaternary structure, forms a complex with TatC.

The protein localises to the cell inner membrane. Functionally, part of the twin-arginine translocation (Tat) system that transports large folded proteins containing a characteristic twin-arginine motif in their signal peptide across membranes. TatA could form the protein-conducting channel of the Tat system. This chain is Sec-independent protein translocase protein TatA, found in Sulfurihydrogenibium sp. (strain YO3AOP1).